The following is a 254-amino-acid chain: 3-deoxy-manno-octulosonate cytidylyltransferase (254 aa).

Belongs to the KdsB family.

The protein resides in the cytoplasm. It carries out the reaction 3-deoxy-alpha-D-manno-oct-2-ulosonate + CTP = CMP-3-deoxy-beta-D-manno-octulosonate + diphosphate. It participates in nucleotide-sugar biosynthesis; CMP-3-deoxy-D-manno-octulosonate biosynthesis; CMP-3-deoxy-D-manno-octulosonate from 3-deoxy-D-manno-octulosonate and CTP: step 1/1. The protein operates within bacterial outer membrane biogenesis; lipopolysaccharide biosynthesis. Its function is as follows. Activates KDO (a required 8-carbon sugar) for incorporation into bacterial lipopolysaccharide in Gram-negative bacteria. This Chlamydia caviae (strain ATCC VR-813 / DSM 19441 / 03DC25 / GPIC) (Chlamydophila caviae) protein is 3-deoxy-manno-octulosonate cytidylyltransferase.